A 265-amino-acid polypeptide reads, in one-letter code: Gamma-secretase subunit APH-1A (265 aa).

The Lumenal segment spans residues 1-2; sequence MG. A helical membrane pass occupies residues 3 to 23; it reads AAVFFGCTFVAFGPAFSLFLI. Residues 24–31 are Cytoplasmic-facing; the sequence is TVAGDPLR. Residues 32–52 form a helical membrane-spanning segment; the sequence is VIILVAGAFFWLVSLLLASVV. Residues 53-68 are Lumenal-facing; that stretch reads WFILVHVTDRSDARLQ. The chain crosses the membrane as a helical span at residues 69-89; sequence YGLLIFGAAVSVLLQEVFRFA. The Cytoplasmic portion of the chain corresponds to 90–118; it reads YYKLLKKADEGLASLSEDGRSPISIRQMA. The helical transmembrane segment at 119-139 threads the bilayer; it reads YVSGLSFGIISGVFSVINILA. The Lumenal portion of the chain corresponds to 140–158; it reads DALGPGVVGIHGDSPYYFL. A helical membrane pass occupies residues 159–179; it reads TSAFLTAAIILLHTFWGVVFF. The Cytoplasmic portion of the chain corresponds to 180 to 186; that stretch reads DACERRR. Residues 187-207 traverse the membrane as a helical segment; sequence YWALGLVVGSHLLTSGLTFLN. At 208-213 the chain is on the lumenal side; sequence PWYEAS. A helical membrane pass occupies residues 214–234; it reads LLPIYAVTVSMGLWAFITAGG. Residues 235 to 265 lie on the Cytoplasmic side of the membrane; sequence SLRSIQRSLSCRRQEDSRVMVYSALRIPPED.

This sequence belongs to the APH-1 family. In terms of assembly, the functional gamma-secretase complex is composed of at least four polypeptides: a presenilin homodimer (PSEN1 or PSEN2), nicastrin (NCSTN), APH1 (APH1A or APH1B) and PSENEN/PEN2.

The protein resides in the endoplasmic reticulum membrane. Its subcellular location is the golgi apparatus. It localises to the golgi stack membrane. Functionally, non-catalytic subunit of the gamma-secretase complex, an endoprotease complex that catalyzes the intramembrane cleavage of integral membrane proteins such as Notch receptors and APP (amyloid-beta precursor protein). Required for normal gamma-secretase assembly. The gamma-secretase complex plays a role in Notch and Wnt signaling cascades and regulation of downstream processes via its role in processing key regulatory proteins, and by regulating cytosolic CTNNB1 levels. This chain is Gamma-secretase subunit APH-1A (Aph1a), found in Mus musculus (Mouse).